The sequence spans 384 residues: UDP-N-acetylglucosamine--N-acetylmuramyl-(pentapeptide) pyrophosphoryl-undecaprenol N-acetylglucosamine transferase (384 aa).

UDP-N-acetyl-alpha-D-glucosamine contacts are provided by residues 17 to 19 (TGG), asparagine 131, arginine 172, serine 200, and glutamine 301.

This sequence belongs to the glycosyltransferase 28 family. MurG subfamily.

Its subcellular location is the cell inner membrane. It carries out the reaction di-trans,octa-cis-undecaprenyl diphospho-N-acetyl-alpha-D-muramoyl-L-alanyl-D-glutamyl-meso-2,6-diaminopimeloyl-D-alanyl-D-alanine + UDP-N-acetyl-alpha-D-glucosamine = di-trans,octa-cis-undecaprenyl diphospho-[N-acetyl-alpha-D-glucosaminyl-(1-&gt;4)]-N-acetyl-alpha-D-muramoyl-L-alanyl-D-glutamyl-meso-2,6-diaminopimeloyl-D-alanyl-D-alanine + UDP + H(+). The protein operates within cell wall biogenesis; peptidoglycan biosynthesis. Functionally, cell wall formation. Catalyzes the transfer of a GlcNAc subunit on undecaprenyl-pyrophosphoryl-MurNAc-pentapeptide (lipid intermediate I) to form undecaprenyl-pyrophosphoryl-MurNAc-(pentapeptide)GlcNAc (lipid intermediate II). In Granulibacter bethesdensis (strain ATCC BAA-1260 / CGDNIH1), this protein is UDP-N-acetylglucosamine--N-acetylmuramyl-(pentapeptide) pyrophosphoryl-undecaprenol N-acetylglucosamine transferase.